Consider the following 501-residue polypeptide: Dipeptide and tripeptide permease A (501 aa).

Residues 1 to 21 (MSTANKKPTESVSLNAFKQPK) lie on the Cytoplasmic side of the membrane. Residues 22-44 (AFYLIFSIELWERFGYYGLQGIM) traverse the membrane as a helical segment. The Periplasmic portion of the chain corresponds to 45-59 (AVYLVKQLGMSEADS). A helical transmembrane segment spans residues 60–80 (ITLFSSFSALVYGLVAIGGWL). Topologically, residues 81-89 (GDKILGTKR) are cytoplasmic. Residues 90 to 110 (VIMLGAVVLAIGYALVAWSGH) traverse the membrane as a helical segment. Residue Asp111 is a topological domain, periplasmic. A helical transmembrane segment spans residues 112 to 132 (AGIVYMGMAAIAVGNGLFKAN). The Cytoplasmic portion of the chain corresponds to 133–153 (PSSLLSTCYAKDDPRLDGAFT). The chain crosses the membrane as a helical span at residues 154 to 174 (MYYMSVNIGSFFSMLATPWLA). Residues 175 to 178 (ARYG) lie on the Periplasmic side of the membrane. A helical transmembrane segment spans residues 179-199 (WSTAFALSVVGMLITVVNFAF). At 200 to 219 (CQRWVKSYGSKPDFEPINFR) the chain is on the cytoplasmic side. The chain crosses the membrane as a helical span at residues 220–240 (NLLLTIVGIVVLIAVATWLLH). The Periplasmic segment spans residues 241–246 (NQDIAR). A helical transmembrane segment spans residues 247 to 267 (MVLGVIALGIVIIFGKEAFSM). At 268–274 (HGAARRK) the chain is on the cytoplasmic side. Residues 275-295 (MIVAFILMLQAIIFFVLYSQM) form a helical membrane-spanning segment. The Periplasmic portion of the chain corresponds to 296–320 (PTSLNFFAIRNVEHSILGIAFEPEQ). A helical membrane pass occupies residues 321-341 (YQALNPFWIIIGSPILAAIYN). Topologically, residues 342-352 (RMGDTLPMPMK) are cytoplasmic. The chain crosses the membrane as a helical span at residues 353–373 (FAIGMVLCSGAFLILPLGAKF). Over 374–383 (ANDAGIVSVN) the chain is Periplasmic. Residues 384–404 (WLIASYGLQSIGELMISGLGL) traverse the membrane as a helical segment. At 405 to 414 (AMVAQLVPQR) the chain is on the cytoplasmic side. The helical transmembrane segment at 415–435 (LMGFIMGSWFLTTAGANIIGG) threads the bilayer. The Periplasmic segment spans residues 436–459 (YVANLMAVPSDVTDPLMSLEVYGR). A helical transmembrane segment spans residues 460–480 (VFMQIGIATAVIAVLMLLTAP). The Cytoplasmic portion of the chain corresponds to 481–501 (KLNRMTQDDDTAEKGSKAATV).

This sequence belongs to the major facilitator superfamily. Proton-dependent oligopeptide transporter (POT/PTR) (TC 2.A.17) family. DtpA subfamily.

Its subcellular location is the cell inner membrane. In terms of biological role, proton-dependent permease that transports di- and tripeptides. This chain is Dipeptide and tripeptide permease A, found in Salmonella typhimurium (strain LT2 / SGSC1412 / ATCC 700720).